Here is a 206-residue protein sequence, read N- to C-terminus: MDTPRRFPTLVQLMQPKAMPVEVLGHLPKRFSWFHSEFLKNPKVVRLEVWLVEKIFGRDRERIPHVQGMSQILIHVNRLDPNGEAEILVFGRPSYQEDTIKMIMNLADYHRQLQAKGSGKALAQDVATKKAEIQLSSTEVREAGTQRSVEVREVGTQGSPVEVRETGTQQSLEAANQSGTQRSPEAASKAVTQRFSEDTRAPVTRL.

Positions 1–40 (MDTPRRFPTLVQLMQPKAMPVEVLGHLPKRFSWFHSEFLK) are involved in RNA binding. One can recognise a KH; atypical domain in the interval 40–103 (KNPKVVRLEV…SYQEDTIKMI (64 aa)). Residues 144–153 (GTQRSVEVRE) show a composition bias toward basic and acidic residues. Residues 144 to 206 (GTQRSVEVRE…EDTRAPVTRL (63 aa)) are disordered. A Phosphothreonine modification is found at Thr-145. Polar residues predominate over residues 166 to 183 (TGTQQSLEAANQSGTQRS). Position 171 is a phosphoserine (Ser-171).

The protein belongs to the KHDC1 family. In terms of assembly, component of the subcortical maternal complex (SCMC), at least composed of NLRP5, KHDC3L, OOEP, and TLE6. Within the complex, interacts with NLRP5, KHDC3L and TLE6. The SCMC may facilitate translocation of its components between the nuclear and cytoplasmic compartments. Forms a scaffold complex with OOEP/FLOPED, and interacts with BLM and TRIM25 at DNA replication forks. Interacts with PARP1; the interaction is increased following the formation of DNA double-strand breaks. Interacts with NUMA1.

It localises to the cytoplasm. The protein resides in the cell cortex. The protein localises to the nucleus. It is found in the mitochondrion. Its subcellular location is the cytoskeleton. It localises to the microtubule organizing center. The protein resides in the centrosome. The protein localises to the chromosome. Component of the subcortical maternal complex (SCMC), a multiprotein complex that plays a key role in early embryonic development. The SCMC complex is a structural constituent of cytoplasmic lattices, which consist in fibrous structures found in the cytoplasm of oocytes and preimplantation embryos. They are required to store maternal proteins critical for embryonic development, such as proteins that control epigenetic reprogramming of the preimplantation embryo, and prevent their degradation or activation. KHDC3 ensures proper spindle assembly by regulating the localization of AURKA via RHOA signaling and of PLK1 via a RHOA-independent process. Required for the localization of MAD2L1 to kinetochores to enable spindle assembly checkpoint function. As part of the OOEP-KHDC3 scaffold, recruits BLM and TRIM25 to DNA replication forks, thereby promoting the ubiquitination of BLM by TRIM25, enhancing BLM retainment at replication forks and therefore promoting stalled replication fork restart. Regulates homologous recombination-mediated DNA repair via recruitment of RAD51 to sites of DNA double-strand breaks, and sustainment of PARP1 activity, which in turn modulates downstream ATM or ATR activation. Activation of ATM or ATR in response to DNA double-strand breaks may be cell-type specific. Its role in DNA double-strand break repair is independent of its role in restarting stalled replication forks. Promotes neural stem cell neurogenesis and neuronal differentiation in the hippocampus. May regulate normal development of learning, memory and anxiety. Capable of binding RNA. This is KH domain-containing protein 3 (KHDC3L) from Macaca mulatta (Rhesus macaque).